We begin with the raw amino-acid sequence, 191 residues long: Leucyl/phenylalanyl-tRNA--protein transferase (191 aa).

It belongs to the L/F-transferase family.

Its subcellular location is the cytoplasm. It catalyses the reaction N-terminal L-lysyl-[protein] + L-leucyl-tRNA(Leu) = N-terminal L-leucyl-L-lysyl-[protein] + tRNA(Leu) + H(+). It carries out the reaction N-terminal L-arginyl-[protein] + L-leucyl-tRNA(Leu) = N-terminal L-leucyl-L-arginyl-[protein] + tRNA(Leu) + H(+). The catalysed reaction is L-phenylalanyl-tRNA(Phe) + an N-terminal L-alpha-aminoacyl-[protein] = an N-terminal L-phenylalanyl-L-alpha-aminoacyl-[protein] + tRNA(Phe). Functions in the N-end rule pathway of protein degradation where it conjugates Leu, Phe and, less efficiently, Met from aminoacyl-tRNAs to the N-termini of proteins containing an N-terminal arginine or lysine. The chain is Leucyl/phenylalanyl-tRNA--protein transferase from Trichormus variabilis (strain ATCC 29413 / PCC 7937) (Anabaena variabilis).